The sequence spans 371 residues: MRPLPSQLPIPLSPEGYGRFAVEFYKRVAVGILGENLVLSPYSVYKAFAMAYAGASGATREELKAVFGFGEDPCVLPAASRGVEEALSAWLQTDFPFKPNYLNKLRCIGAEAKYVDFERDYKSAIAAINKWAEEKTRGLIKDLVPADYPEGWDVRAVLVSALYFKGNWWPDRFQRVGKREFKGAGPADFIALDLSSCGDPSLRGRASSDLTVVELPFNNTEVALYIIMPRDLPSFVKELTYEKLREIISTLPDQVIRVEMPLFKAEFKGSVKQALREMGVVRAFETADFTEMAYRRLYIDDVFHGAYLNADENGVVAAAATAVVFKPVCAKGGGVEVVVDKPFLFVLADRTSGVIYFIGHVVNPSPGFTPT.

Belongs to the serpin family.

This is an uncharacterized protein from Pyrobaculum aerophilum (strain ATCC 51768 / DSM 7523 / JCM 9630 / CIP 104966 / NBRC 100827 / IM2).